The primary structure comprises 238 residues: Ribosomal RNA small subunit methyltransferase G (238 aa).

S-adenosyl-L-methionine-binding positions include glycine 77, phenylalanine 82, 128–129, and arginine 147; that span reads AE.

The protein belongs to the methyltransferase superfamily. RNA methyltransferase RsmG family.

The protein localises to the cytoplasm. In terms of biological role, specifically methylates the N7 position of guanine in position 535 of 16S rRNA. The polypeptide is Ribosomal RNA small subunit methyltransferase G (Exiguobacterium sibiricum (strain DSM 17290 / CCUG 55495 / CIP 109462 / JCM 13490 / 255-15)).